The sequence spans 591 residues: Paxillin (591 aa).

An N-acetylmethionine modification is found at methionine 1. The LD motif 1 signature appears at 3-15 (DLDALLADLESTT). The tract at residues 17–139 (HISKRPVFLS…SPTVMSSSLG (123 aa)) is disordered. Tyrosine 31 carries the post-translational modification Phosphotyrosine; by PTK6. Residues 45–54 (VPPPVPPPPS) show a composition bias toward pro residues. Serine 83 is subject to Phosphoserine. Tyrosine 88 carries the post-translational modification Phosphotyrosine. A compositionally biased stretch (low complexity) spans 89 to 99 (SSSAKNSSASN). Serine 106 bears the Phosphoserine mark. Tyrosine 118 is subject to Phosphotyrosine; by PTK6. 3 positions are modified to phosphoserine: serine 119, serine 126, and serine 130. A compositionally biased stretch (polar residues) spans 121 to 137 (PNKQKSAEPSPTVMSSS). Position 132 is a phosphothreonine (threonine 132). Phosphoserine is present on residues serine 137, serine 140, and serine 143. Positions 144 to 156 (ELDRLLLELNAVQ) match the LD motif 2 motif. The disordered stretch occupies residues 156 to 261 (QHSPPGFPAD…QQQTRISASS (106 aa)). Position 181 is a phosphotyrosine (tyrosine 181). An LD motif 3 motif is present at residues 216-228 (SVESLLDELESSV). Serine 230 carries the phosphoserine modification. Polar residues predominate over residues 236–261 (TVNQGEMSSPQRVTSSQQQTRISASS). Serine 244 carries the post-translational modification Phosphoserine; by CDK5. 8 positions are modified to phosphoserine: serine 250, serine 258, serine 261, serine 272, serine 303, serine 322, serine 332, and serine 340. A required for binding to PARVA and ILK region spans residues 262 to 315 (ATRELDELMASLSDFKMQGLEQRVDGERPWAAGWPPSSRQSSPEGQDEGGFMAQ). The short motif at 265-276 (ELDELMASLSDF) is the LD motif 4 element. Residues 289–338 (RPWAAGWPPSSRQSSPEGQDEGGFMAQGKTGSSSPPGGLSKPGSQLDSML) form a disordered region. Residues 315–334 (QGKTGSSSPPGGLSKPGSQL) are compositionally biased toward low complexity. Residues 333–345 (QLDSMLGSLQSDL) carry the LD motif 5 motif. 4 LIM zinc-binding domains span residues 356-415 (GVCG…LFSP), 416-473 (RCYY…DMFA), 474-533 (PKCG…RRGS), and 534-591 (LCSG…KLFC). A Phosphoserine modification is found at serine 533.

Belongs to the paxillin family. Interacts in vitro with VCL/vinculin as well as to the SH3 domain of SRC and, when tyrosine phosphorylated, to the SH2 domain of CRK. Interacts with GIT1. Interacts with NUDT16L1/SDOS. Interacts with PTK2/FAK1. Interacts with PTK2B/PYK2. Interacts with ASAP2. Interacts with unphosphorylated ITGA4. Interacts with RNF5. Interacts with PDCD10. Interacts with NEK3, the interaction is prolactin-dependent. Interacts with PTK6. Interacts with TGFB1I1. Interacts with SORBS1. Interacts with PARVB. Interacts (via LD motif 4) with PARVA/PARVIN. Interacts (via LD motif 4) with ILK. Interacts (via cytoplasmic domain) with CEACAM1; the interaction is phosphotyrosyl-dependent. Interacts with LIMA1; this complex stabilizes actin dynamics. Interacts with CD36 (via C-terminus). Interacts with TRIM15. Interacts with PAK4; PAK4 acts as a scaffold to suppport PAXI phosphorylation at Ser-272. Post-translationally, phosphorylated by MAPK1/ERK2. Phosphorylated on tyrosine residues during integrin-mediated cell adhesion, embryonic development, fibroblast transformation and following stimulation of cells by mitogens. Phosphorylation at Ser-244 by CDK5 reduces its interaction with PTK2/FAK1 in matrix-cell focal adhesions (MCFA) during oligodendrocytes (OLs) differentiation. Phosphorylation at Tyr-31 and Tyr-118 by PTK6 promote the activation of RAC1 via CRK/CrKII, thereby promoting migration and invasion. Phosphorylation at Ser-250 by SLK is required for PXN redistribution and cell motility. Phosphorylation at Ser-272 promotes focal adhesion disassembly during cell migration.

The protein resides in the cytoplasm. It is found in the cytoskeleton. It localises to the cell junction. Its subcellular location is the focal adhesion. The protein localises to the cell cortex. Cytoskeletal protein involved in actin-membrane attachment at sites of cell adhesion to the extracellular matrix (focal adhesion). Recruits other proteins such as TRIM15 to focal adhesion. The protein is Paxillin of Mus musculus (Mouse).